Consider the following 200-residue polypeptide: Small ribosomal subunit protein eS1 (200 aa).

The protein belongs to the eukaryotic ribosomal protein eS1 family.

The chain is Small ribosomal subunit protein eS1 from Thermococcus gammatolerans (strain DSM 15229 / JCM 11827 / EJ3).